We begin with the raw amino-acid sequence, 260 residues long: 2-amino-5-formylamino-6-ribosylaminopyrimidin-4(3H)-one 5'-monophosphate deformylase (260 aa).

The Fe cation site is built by E33, H35, D44, and H112.

It belongs to the creatininase superfamily. FAPy deformylase family. As to quaternary structure, homodimer. The cofactor is Fe(2+). Zn(2+) is required as a cofactor.

The enzyme catalyses 2-amino-5-formylamino-6-(5-phospho-D-ribosylamino)pyrimidin-4(3H)-one + H2O = 2,5-diamino-6-(1-D-ribosylamino)pyrimidin-4(3H)-one 5'-phosphate + formate + H(+). Its pathway is cofactor biosynthesis; coenzyme F420 biosynthesis. The protein operates within cofactor biosynthesis; riboflavin biosynthesis. Functionally, catalyzes the hydrolysis of the formamide of 2-amino-5-formylamino-6-ribosylamino-4(3H)-pyrimidinone 5'-monophosphate (FAPy) to form 2,5-diamino-6-ribosylamino-4(3H)-pyrimidinone 5'-phosphate (APy). This is 2-amino-5-formylamino-6-ribosylaminopyrimidin-4(3H)-one 5'-monophosphate deformylase from Methanococcus voltae (strain ATCC BAA-1334 / A3).